A 64-amino-acid polypeptide reads, in one-letter code: Large ribosomal subunit protein uL29 (64 aa).

Belongs to the universal ribosomal protein uL29 family.

The chain is Large ribosomal subunit protein uL29 from Dichelobacter nodosus (strain VCS1703A).